Here is a 371-residue protein sequence, read N- to C-terminus: Proton-coupled zinc antiporter SLC30A2 (371 aa).

Topologically, residues 1 to 69 (MQTMDKQNLL…DPEKQRARRK (69 aa)) are cytoplasmic. The short motif at 47 to 50 (HYCH) is the Mitochondrial localization signal element. Cys-49 serves as a coordination point for Zn(2+). A helical transmembrane segment spans residues 70 to 90 (LYVASAICLVFMIGEIIGGYL). The Lumenal portion of the chain corresponds to 91–99 (AQSLAIMTD). The chain crosses the membrane as a helical span at residues 100 to 120 (AAHLLTDFASMLISLFALWVS). His-102 and Asp-106 together coordinate Zn(2+). Residues 121–136 (SRPATKTMNFGWHRAE) are Cytoplasmic-facing. A helical transmembrane segment spans residues 137–157 (ILGALLSVLSIWVVTGVLVYL). The Lumenal portion of the chain corresponds to 158 to 172 (AVQRLISGDYEIKGD). Residues 173-193 (TMLITSGCAVAVNLIMGLALH) form a helical membrane-spanning segment. At 194 to 219 (QSGHGHSHGNSRDDSSQQQNPSVRAA) the chain is on the cytoplasmic side. Residues 220 to 240 (FIHVIGDLLQSVGVLVAAYII) form a helical membrane-spanning segment. The Zn(2+) site is built by His-222 and Asp-226. Over 241–248 (YFKPEYKY) the chain is Lumenal. A helical transmembrane segment spans residues 249 to 269 (VDPICTFLFSILVLGTTLTIL). Over 270 to 303 (RDVILVLMEGTPKGVDFTTVKNLLLSVDGVEALH) the chain is Cytoplasmic. The Lysosomal targeting motif signature appears at 293 to 294 (LL). Ser-295 bears the Phosphoserine mark. The Zn(2+) site is built by His-303, His-320, and Glu-354. Residues 304-324 (SLHIWALTVAQPVLSVHIAIA) form a helical membrane-spanning segment. Residues 325–371 (QNADAQAVLKVARDRLQGKFNFHTMTIQIEKYSEDMKNCQACQGPLE) lie on the Lumenal side of the membrane.

It belongs to the cation diffusion facilitator (CDF) transporter (TC 2.A.4) family. SLC30A subfamily. Homodimer. Interacts (via lysosomal targeting motif) with AP3D1; in AP-3-mediated transport to lysosomes. Interacts with TMEM163. Phosphorylated at Ser-295. Phosphorylation at Ser-295 prevents localization to lysosomes. Dephosphorylation of Ser-295 which triggers localization to lysosomes, accumulation of zinc into lysosomes and lysosomal-mediated cell death is induced by TNF-alpha.

It is found in the cytoplasmic vesicle. The protein resides in the secretory vesicle membrane. Its subcellular location is the zymogen granule membrane. It localises to the endosome membrane. The protein localises to the lysosome membrane. It is found in the mitochondrion inner membrane. The protein resides in the cell membrane. It catalyses the reaction Zn(2+)(in) + 2 H(+)(out) = Zn(2+)(out) + 2 H(+)(in). In terms of biological role, electroneutral proton-coupled antiporter concentrating zinc ions into a variety of intracellular organelles including endosomes, zymogen granules and mitochondria. Thereby, plays a crucial role in cellular zinc homeostasis to confer upon cells protection against its potential cytotoxicity. Regulates the zinc concentration of milk, through the transport of zinc ions into secretory vesicles of mammary cells. By concentrating zinc ions into lysosomes participates to lysosomal-mediated cell death during early mammary gland involution. Electroneutral proton-coupled antiporter mediating the efflux of zinc ions through the plasma membrane. This chain is Proton-coupled zinc antiporter SLC30A2, found in Mus musculus (Mouse).